Reading from the N-terminus, the 132-residue chain is Transmembrane protein 170B (132 aa).

Topologically, residues 1–37 (MKAEGGDHSMINLSVQQVLSLWAHGTVLRNLTEMWYW) are extracellular. N-linked (GlcNAc...) asparagine glycosylation is present at asparagine 12. A helical membrane pass occupies residues 38-58 (IFLWALFSSLFVHGAAGVLMF). Topologically, residues 59–68 (VMLQRHRQGR) are cytoplasmic. Residues 69 to 89 (VISVIAVSIGFLASVTGAMIT) traverse the membrane as a helical segment. At 90–104 (SAAVAGIYRVAGKNM) the chain is on the extracellular side. Residues 105–125 (APLEALVWGVGQTVLTLIISF) form a helical membrane-spanning segment. Topologically, residues 126–132 (SRILATL) are cytoplasmic.

It belongs to the TMEM170 family. Interacts with CTNNB1. Expressed in normal breast tissues. Down-regulated in breast cancer cells (at protein level).

It is found in the cell membrane. Negatively regulates the canonical Wnt signaling in breast cancer cells. Exerts an inhibitory effect on breast cancer growth by inhibiting CTNNB1 stabilization and nucleus translocation, which reduces the activity of Wnt targets. This chain is Transmembrane protein 170B (TMEM170B), found in Homo sapiens (Human).